The chain runs to 466 residues: Asparagine--tRNA ligase (466 aa).

This sequence belongs to the class-II aminoacyl-tRNA synthetase family. Homodimer.

The protein resides in the cytoplasm. It catalyses the reaction tRNA(Asn) + L-asparagine + ATP = L-asparaginyl-tRNA(Asn) + AMP + diphosphate + H(+). This Psychromonas ingrahamii (strain DSM 17664 / CCUG 51855 / 37) protein is Asparagine--tRNA ligase.